A 236-amino-acid polypeptide reads, in one-letter code: Phosphoribosylaminoimidazole-succinocarboxamide synthase (236 aa).

This sequence belongs to the SAICAR synthetase family.

The enzyme catalyses 5-amino-1-(5-phospho-D-ribosyl)imidazole-4-carboxylate + L-aspartate + ATP = (2S)-2-[5-amino-1-(5-phospho-beta-D-ribosyl)imidazole-4-carboxamido]succinate + ADP + phosphate + 2 H(+). Its pathway is purine metabolism; IMP biosynthesis via de novo pathway; 5-amino-1-(5-phospho-D-ribosyl)imidazole-4-carboxamide from 5-amino-1-(5-phospho-D-ribosyl)imidazole-4-carboxylate: step 1/2. This is Phosphoribosylaminoimidazole-succinocarboxamide synthase from Campylobacter jejuni subsp. jejuni serotype O:6 (strain 81116 / NCTC 11828).